The primary structure comprises 28 residues: uncharacterized protein (28 aa).

This is an uncharacterized protein from Spiroplasma virus 4 (SpV4).